A 184-amino-acid polypeptide reads, in one-letter code: ATP synthase subunit delta (184 aa).

Belongs to the ATPase delta chain family. In terms of assembly, F-type ATPases have 2 components, F(1) - the catalytic core - and F(0) - the membrane proton channel. F(1) has five subunits: alpha(3), beta(3), gamma(1), delta(1), epsilon(1). F(0) has three main subunits: a(1), b(2) and c(10-14). The alpha and beta chains form an alternating ring which encloses part of the gamma chain. F(1) is attached to F(0) by a central stalk formed by the gamma and epsilon chains, while a peripheral stalk is formed by the delta and b chains.

Its subcellular location is the cell inner membrane. Functionally, f(1)F(0) ATP synthase produces ATP from ADP in the presence of a proton or sodium gradient. F-type ATPases consist of two structural domains, F(1) containing the extramembraneous catalytic core and F(0) containing the membrane proton channel, linked together by a central stalk and a peripheral stalk. During catalysis, ATP synthesis in the catalytic domain of F(1) is coupled via a rotary mechanism of the central stalk subunits to proton translocation. Its function is as follows. This protein is part of the stalk that links CF(0) to CF(1). It either transmits conformational changes from CF(0) to CF(1) or is implicated in proton conduction. In Rickettsia felis (strain ATCC VR-1525 / URRWXCal2) (Rickettsia azadi), this protein is ATP synthase subunit delta.